Here is a 595-residue protein sequence, read N- to C-terminus: Merlin (595 aa).

Residue serine 13 is modified to Phosphoserine. Residues 22–311 enclose the FERM domain; the sequence is FTVRIVTMDA…GNHDLFMRRR (290 aa). Residue serine 518 is modified to Phosphoserine; by PAK.

In terms of assembly, interacts with NHERF1, HGS and AGAP2. Interacts with LAYN. Interacts with SGSM3. Interacts (via FERM domain) with MPP1. Interacts with WWC1. Interacts with the CUL4A-RBX1-DDB1-VprBP/DCAF1 E3 ubiquitin-protein ligase complex. The unphosphorylated form interacts (via FERM domain) with VPRBP/DCAF1. Interacts (via FERM domain) with NOP53; the interaction is direct. Interacts with SCHIP1; the interaction is direct. In terms of processing, phosphorylation of Ser-518 inhibits nuclear localization by disrupting the intramolecular association of the FERM domain with the C-terminal tail. The dephosphorylation of Ser-518 favors the interaction with NOP53. Post-translationally, ubiquitinated by the CUL4A-RBX1-DDB1-DCAF1/VprBP E3 ubiquitin-protein ligase complex for ubiquitination and subsequent proteasome-dependent degradation. In terms of tissue distribution, widely expressed. Isoform 1 and isoform 3 are predominant. Isoform 4, isoform 5 and isoform 6 are expressed moderately. Isoform 8 is found at low frequency. Isoform 7, isoform 9 and isoform 10 are not expressed in adult tissues, with the exception of adult retina expressing isoform 10. Isoform 9 is faintly expressed in fetal brain, heart, lung, skeletal muscle and spleen. Fetal thymus expresses isoforms 1, 7, 9 and 10 at similar levels.

It localises to the cell projection. It is found in the filopodium membrane. Its subcellular location is the ruffle membrane. The protein localises to the nucleus. The protein resides in the cytoplasm. It localises to the perinuclear region. It is found in the cytoplasmic granule. Its subcellular location is the cytoskeleton. Functionally, probable regulator of the Hippo/SWH (Sav/Wts/Hpo) signaling pathway, a signaling pathway that plays a pivotal role in tumor suppression by restricting proliferation and promoting apoptosis. Along with WWC1 can synergistically induce the phosphorylation of LATS1 and LATS2 and can probably function in the regulation of the Hippo/SWH (Sav/Wts/Hpo) signaling pathway. May act as a membrane stabilizing protein. May inhibit PI3 kinase by binding to AGAP2 and impairing its stimulating activity. Suppresses cell proliferation and tumorigenesis by inhibiting the CUL4A-RBX1-DDB1-VprBP/DCAF1 E3 ubiquitin-protein ligase complex. The protein is Merlin (NF2) of Homo sapiens (Human).